Reading from the N-terminus, the 742-residue chain is 5-methyltetrahydropteroyltriglutamate--homocysteine methyltransferase (742 aa).

5-methyltetrahydropteroyltri-L-glutamate is bound by residues 18–21 (REWK) and Lys-112. Residues 420-422 (IGS) and Glu-473 each bind L-homocysteine. Residues 420–422 (IGS) and Glu-473 each bind L-methionine. A 5-methyltetrahydropteroyltri-L-glutamate-binding site is contributed by Trp-550. Asp-588 serves as a coordination point for L-homocysteine. An L-methionine-binding site is contributed by Asp-588. Residue Glu-594 participates in 5-methyltetrahydropteroyltri-L-glutamate binding. His-630, Cys-632, and Glu-654 together coordinate Zn(2+). The Proton donor role is filled by His-683. Position 715 (Cys-715) interacts with Zn(2+).

It belongs to the vitamin-B12 independent methionine synthase family. It depends on Zn(2+) as a cofactor.

The catalysed reaction is 5-methyltetrahydropteroyltri-L-glutamate + L-homocysteine = tetrahydropteroyltri-L-glutamate + L-methionine. It functions in the pathway amino-acid biosynthesis; L-methionine biosynthesis via de novo pathway; L-methionine from L-homocysteine (MetE route): step 1/1. Functionally, catalyzes the transfer of a methyl group from 5-methyltetrahydrofolate to homocysteine resulting in methionine formation. In Staphylococcus aureus (strain Mu3 / ATCC 700698), this protein is 5-methyltetrahydropteroyltriglutamate--homocysteine methyltransferase.